The chain runs to 210 residues: 7-carboxy-7-deazaguanine synthase (210 aa).

Substrate-binding positions include 12-14 (LQG) and Arg-27. The Radical SAM core domain occupies 18 to 210 (QAGRAAVFCR…LQTHKYIGIP (193 aa)). [4Fe-4S] cluster contacts are provided by Cys-31, Cys-46, and Cys-49. Thr-51 lines the Mg(2+) pocket. Thr-90 contacts substrate. Residues Gly-92, 133–135 (SPK), and 173–176 (QPMD) contribute to the S-adenosyl-L-methionine site. Residue Pro-210 coordinates substrate.

Belongs to the radical SAM superfamily. 7-carboxy-7-deazaguanine synthase family. Homodimer. It depends on [4Fe-4S] cluster as a cofactor. S-adenosyl-L-methionine is required as a cofactor. The cofactor is Mg(2+).

The enzyme catalyses 6-carboxy-5,6,7,8-tetrahydropterin + H(+) = 7-carboxy-7-deazaguanine + NH4(+). It functions in the pathway purine metabolism; 7-cyano-7-deazaguanine biosynthesis. Its function is as follows. Catalyzes the complex heterocyclic radical-mediated conversion of 6-carboxy-5,6,7,8-tetrahydropterin (CPH4) to 7-carboxy-7-deazaguanine (CDG), a step common to the biosynthetic pathways of all 7-deazapurine-containing compounds. The chain is 7-carboxy-7-deazaguanine synthase from Bordetella pertussis (strain Tohama I / ATCC BAA-589 / NCTC 13251).